A 288-amino-acid polypeptide reads, in one-letter code: Adenylate kinase (288 aa).

Residue 65–70 (GVGKGT) participates in ATP binding. An NMP region spans residues 85–114 (ATGDLVRDELKSSGPLSKQLAEIVNQGKLV). Residues T86, R91, 112–114 (KLV), 142–145 (GFPR), and Q149 each bind AMP. Residues 178–226 (GRRICSECGKNFNVASIDVAGENGAPRISMARLNPPFTVCFKLITRADD) are LID. Residue R179 coordinates ATP. Residues R223 and R234 each coordinate AMP. G262 serves as a coordination point for ATP.

The protein belongs to the adenylate kinase family. Monomer.

The protein localises to the cytoplasm. The catalysed reaction is AMP + ATP = 2 ADP. Functionally, catalyzes the reversible transfer of the terminal phosphate group between ATP and AMP. Plays an important role in cellular energy homeostasis and in adenine nucleotide metabolism. The polypeptide is Adenylate kinase (ADK) (Solanum tuberosum (Potato)).